Here is a 714-residue protein sequence, read N- to C-terminus: Polyribonucleotide nucleotidyltransferase (714 aa).

Mg(2+) is bound by residues Asp487 and Asp493. In terms of domain architecture, KH spans 554–613 (PRIEVMTIPVDKIREVIGSGGKVIREIVEKTGAKINIEDDGTIKIASASGKEIEAARKWI). In terms of domain architecture, S1 motif spans 623-691 (GVVYEGTVVK…ERGKVRLSMK (69 aa)).

Belongs to the polyribonucleotide nucleotidyltransferase family. Mg(2+) serves as cofactor.

The protein localises to the cytoplasm. It carries out the reaction RNA(n+1) + phosphate = RNA(n) + a ribonucleoside 5'-diphosphate. Involved in mRNA degradation. Catalyzes the phosphorolysis of single-stranded polyribonucleotides processively in the 3'- to 5'-direction. This is Polyribonucleotide nucleotidyltransferase from Allorhizobium ampelinum (strain ATCC BAA-846 / DSM 112012 / S4) (Agrobacterium vitis (strain S4)).